We begin with the raw amino-acid sequence, 229 residues long: Prolactin (229 aa).

The N-terminal stretch at 1-30 (MDKKRSSLKGSLLLLLLLVSDLLLCKSVAS) is a signal peptide. The cysteines at positions 34 and 41 are disulfide-linked. At Ser-56 the chain carries Phosphoserine. N-linked (GlcNAc...) asparagine; partial glycosylation is present at Asn-61. Phosphoserine is present on residues Ser-64 and Ser-120. Intrachain disulfides connect Cys-88/Cys-204 and Cys-221/Cys-229.

Belongs to the somatotropin/prolactin family. Interacts with PRLR.

Its subcellular location is the secreted. Functionally, prolactin acts primarily on the mammary gland by promoting lactation. The sequence is that of Prolactin (PRL) from Equus caballus (Horse).